Reading from the N-terminus, the 256-residue chain is 5-keto-4-deoxy-D-glucarate aldolase (256 aa).

The active-site Proton acceptor is the His-50. A substrate-binding site is contributed by Gln-151. A Mg(2+)-binding site is contributed by Glu-153. Residues Ser-178 and Asp-179 each contribute to the substrate site. Residue Asp-179 coordinates Mg(2+).

Belongs to the HpcH/HpaI aldolase family. KDGluc aldolase subfamily. Homohexamer; trimer of dimers. Mg(2+) is required as a cofactor.

It catalyses the reaction 5-dehydro-4-deoxy-D-glucarate = 2-hydroxy-3-oxopropanoate + pyruvate. It carries out the reaction 2-dehydro-3-deoxy-D-glucarate = 2-hydroxy-3-oxopropanoate + pyruvate. It functions in the pathway carbohydrate acid metabolism; galactarate degradation; D-glycerate from galactarate: step 2/3. Functionally, catalyzes the reversible retro-aldol cleavage of both 5-keto-4-deoxy-D-glucarate and 2-keto-3-deoxy-D-glucarate to pyruvate and tartronic semialdehyde. This Salmonella paratyphi A (strain ATCC 9150 / SARB42) protein is 5-keto-4-deoxy-D-glucarate aldolase.